A 63-amino-acid chain; its full sequence is Kappa-theraphotoxin-Gr3a (63 aa).

The N-terminal stretch at 1-21 (MKTSVFVLVLGLVLLFAVSFA) is a signal peptide. Positions 22 to 29 (TEMEESAR) are excised as a propeptide. 3 disulfides stabilise this stretch: Cys31–Cys45, Cys38–Cys50, and Cys44–Cys57.

Belongs to the neurotoxin 10 (Hwtx-1) family. 63 (VsTx1) subfamily. Expressed by the venom gland.

It localises to the secreted. Functionally, inhibits sodium channels Nav1.7/SCN9A and potassium channels Kv11.1/KCNH2. Also binds the voltage-sensor domain of the potassium channel KvAP (from the archaeon Aeropyrum pernix) with very slow apparent binding kinetics and affects channel gating. Reaches its target by dynamically partitioning into anionic or zwitterionic headgroup lipid membranes. May bind to the open state of KvAP. The protein is Kappa-theraphotoxin-Gr3a of Grammostola rosea (Chilean rose tarantula).